A 360-amino-acid polypeptide reads, in one-letter code: Venom serine protease Bi-VSP (360 aa).

A signal peptide spans 1-26 (MTGSKMLFACLALIAFLHPLVHVASA). Residues 27 to 113 (QECTTPNNKA…CGFSNVSHTR (87 aa)) constitute a propeptide that is removed on maturation. Positions 28–79 (ECTTPNNKAGKCLGIRVCKPLLEMLQTQGHAAADFLRQSVCKYENNNPIVCC) constitute a Clip domain. Intrachain disulfides connect Cys29–Cys78, Cys39–Cys68, Cys45–Cys79, Cys104–Cys230, Cys147–Cys163, Cys278–Cys296, and Cys307–Cys335. N-linked (GlcNAc...) asparagine glycosylation occurs at Asn108. The 247-residue stretch at 114-360 (VVGGKPAVLG…LDDFILPAMQ (247 aa)) folds into the Peptidase S1 domain. His162 acts as the Charge relay system in catalysis. Residues Asp176, Asn178, Arg181, and Asp184 each coordinate Ca(2+). Residue Asp210 is the Charge relay system of the active site. Ser311 (charge relay system) is an active-site residue.

It belongs to the peptidase S1 family. CLIP subfamily. In terms of tissue distribution, expressed by the venom gland.

The protein resides in the secreted. In terms of biological role, multifunctional venom serine protease. In insects, it acts as an arthropod prophenoloxidase-activating factor, thereby triggering the phenoloxidase cascade. When injected into larvae, it induces a lethal melanization response in target insects by modulating the innate immune response. In mammals, it converts fibrinogen into fibrin, activates prothrombin, and also degrades fibrin. In mammal, it may act in a cooperative manner with the serine protease inhibitor Bi-KTI (AC G3LH89) to promote the spread of bee venom under anti-bleeding conditions. This chain is Venom serine protease Bi-VSP, found in Bombus ignitus (Bumblebee).